We begin with the raw amino-acid sequence, 231 residues long: Probable methylthioribulose-1-phosphate dehydratase (231 aa).

Cys-82 contributes to the substrate binding site. His-100 and His-102 together coordinate Zn(2+). Glu-123 functions as the Proton donor/acceptor in the catalytic mechanism. Residue His-181 coordinates Zn(2+).

Belongs to the aldolase class II family. MtnB subfamily. Zn(2+) serves as cofactor.

It localises to the cytoplasm. It catalyses the reaction 5-(methylsulfanyl)-D-ribulose 1-phosphate = 5-methylsulfanyl-2,3-dioxopentyl phosphate + H2O. It functions in the pathway amino-acid biosynthesis; L-methionine biosynthesis via salvage pathway; L-methionine from S-methyl-5-thio-alpha-D-ribose 1-phosphate: step 2/6. Catalyzes the dehydration of methylthioribulose-1-phosphate (MTRu-1-P) into 2,3-diketo-5-methylthiopentyl-1-phosphate (DK-MTP-1-P). The chain is Probable methylthioribulose-1-phosphate dehydratase from Dictyostelium discoideum (Social amoeba).